The chain runs to 254 residues: 4-hydroxy-tetrahydrodipicolinate reductase (254 aa).

Residues 8 to 13, Asp35, 86 to 88, and 110 to 113 contribute to the NAD(+) site; these read GCSGKM, CST, and SANM. The active-site Proton donor/acceptor is the His143. His144 is a binding site for (S)-2,3,4,5-tetrahydrodipicolinate. The Proton donor role is filled by Lys147. 153–154 is a binding site for (S)-2,3,4,5-tetrahydrodipicolinate; it reads GT.

It belongs to the DapB family.

It localises to the cytoplasm. The enzyme catalyses (S)-2,3,4,5-tetrahydrodipicolinate + NAD(+) + H2O = (2S,4S)-4-hydroxy-2,3,4,5-tetrahydrodipicolinate + NADH + H(+). The catalysed reaction is (S)-2,3,4,5-tetrahydrodipicolinate + NADP(+) + H2O = (2S,4S)-4-hydroxy-2,3,4,5-tetrahydrodipicolinate + NADPH + H(+). It functions in the pathway amino-acid biosynthesis; L-lysine biosynthesis via DAP pathway; (S)-tetrahydrodipicolinate from L-aspartate: step 4/4. Its function is as follows. Catalyzes the conversion of 4-hydroxy-tetrahydrodipicolinate (HTPA) to tetrahydrodipicolinate. This chain is 4-hydroxy-tetrahydrodipicolinate reductase, found in Clostridium perfringens (strain SM101 / Type A).